The primary structure comprises 496 residues: NADH-quinone oxidoreductase subunit N (496 aa).

Transmembrane regions (helical) follow at residues 16–36 (SLSPMLSMMVFALFILIVGAI), 46–66 (CVFCIIAIFVNLGITLDFNGL), 79–99 (ISIISQIIILIASALFIPLAL), 116–136 (FLFMIAGFLFMVSSNNLLIIF), 166–186 (FAMGSLSAGFFAMAIAMFYLA), 208–228 (LIILLGCVFIASAIGFKLSLI), 245–267 (LAGYMSIVPKVAGFIVALRIFAM), 278–298 (DMLYIIAVLTMSLANIMALVQ), 304–324 (MLAFSSIAHAGVVLCALVANS), 331–351 (LFFYWIMFLFANLGAFSMLWV), 382–402 (AVIMGIFMIALAGIPPFSVFW), 422–442 (IIMINSAIAIYYYLKLIVFMF), and 464–484 (VIVGVAVAGTVFAFLFSGAIL).

This sequence belongs to the complex I subunit 2 family. As to quaternary structure, NDH-1 is composed of 14 different subunits. Subunits NuoA, H, J, K, L, M, N constitute the membrane sector of the complex.

Its subcellular location is the cell inner membrane. The catalysed reaction is a quinone + NADH + 5 H(+)(in) = a quinol + NAD(+) + 4 H(+)(out). In terms of biological role, NDH-1 shuttles electrons from NADH, via FMN and iron-sulfur (Fe-S) centers, to quinones in the respiratory chain. The immediate electron acceptor for the enzyme in this species is believed to be ubiquinone. Couples the redox reaction to proton translocation (for every two electrons transferred, four hydrogen ions are translocated across the cytoplasmic membrane), and thus conserves the redox energy in a proton gradient. The polypeptide is NADH-quinone oxidoreductase subunit N (Campylobacter concisus (strain 13826)).